The following is a 747-amino-acid chain: ATP-dependent RNA helicase DBP7 (747 aa).

2 disordered regions span residues 1–102 (MDDD…TYVS) and 111–130 (SKLENEKVEEEKTYLPSNAP). A compositionally biased stretch (polar residues) spans 15 to 24 (SNASSKSSAQ). 2 stretches are compositionally biased toward basic and acidic residues: residues 75-96 (SFREEQLAKRPKYFESRGEGGK) and 111-123 (SKLENEKVEEEKT). A Q motif motif is present at residues 135 to 164 (DDFNGLGLNDNLVHHLTESLRFKNPTQIQK). One can recognise a Helicase ATP-binding domain in the interval 168 to 363 (PSLLSTSRDL…SIILNNPEQI (196 aa)). 181–188 (AQTGSGKT) serves as a coordination point for ATP. The DEAD box signature appears at 295 to 298 (DEGD). Positions 401-626 (TLSAVLKEVA…SSEIKKSDPK (226 aa)) constitute a Helicase C-terminal domain. Residues 700–729 (KKLGSLATKSSSTRKEYGEKSRKLEDPRKK) form a disordered region. Over residues 712–728 (TRKEYGEKSRKLEDPRK) the composition is skewed to basic and acidic residues.

The protein belongs to the DEAD box helicase family. DDX31/DBP7 subfamily.

The protein resides in the nucleus. It is found in the nucleolus. It catalyses the reaction ATP + H2O = ADP + phosphate + H(+). In terms of biological role, ATP-binding RNA helicase involved in the biogenesis of 60S ribosomal subunits and is required for the normal formation of 25S and 5.8S rRNAs. The chain is ATP-dependent RNA helicase DBP7 (DBP7) from Meyerozyma guilliermondii (strain ATCC 6260 / CBS 566 / DSM 6381 / JCM 1539 / NBRC 10279 / NRRL Y-324) (Yeast).